The following is a 443-amino-acid chain: ATP-dependent protease ATPase subunit HslU (443 aa).

Residues I18 and G60 to E65 contribute to the ATP site. The segment at A139–S158 is disordered. The ATP site is built by D256, E321, and R393.

The protein belongs to the ClpX chaperone family. HslU subfamily. As to quaternary structure, a double ring-shaped homohexamer of HslV is capped on each side by a ring-shaped HslU homohexamer. The assembly of the HslU/HslV complex is dependent on binding of ATP.

The protein resides in the cytoplasm. Functionally, ATPase subunit of a proteasome-like degradation complex; this subunit has chaperone activity. The binding of ATP and its subsequent hydrolysis by HslU are essential for unfolding of protein substrates subsequently hydrolyzed by HslV. HslU recognizes the N-terminal part of its protein substrates and unfolds these before they are guided to HslV for hydrolysis. The protein is ATP-dependent protease ATPase subunit HslU of Erwinia tasmaniensis (strain DSM 17950 / CFBP 7177 / CIP 109463 / NCPPB 4357 / Et1/99).